Here is a 616-residue protein sequence, read N- to C-terminus: Chaperone protein HscA (616 aa).

It belongs to the heat shock protein 70 family.

Its function is as follows. Chaperone involved in the maturation of iron-sulfur cluster-containing proteins. Has a low intrinsic ATPase activity which is markedly stimulated by HscB. Involved in the maturation of IscU. This chain is Chaperone protein HscA, found in Salmonella arizonae (strain ATCC BAA-731 / CDC346-86 / RSK2980).